The chain runs to 95 residues: Corticostatin-3 (95 aa).

The signal sequence occupies residues 1–19; the sequence is MRTLALLAAILLVALQAQA. Positions 20-62 are excised as a propeptide; the sequence is EHVSVSIDEVVDQQPPQAEDQDVAIYVKEHESSALEALGVKAG. Disulfide bonds link Cys-65–Cys-93, Cys-67–Cys-82, and Cys-72–Cys-92.

It belongs to the alpha-defensin family.

It localises to the secreted. In terms of biological role, this peptide has antibiotic, anti-fungi and antiviral activity. It also inhibits corticotropin (ACTH) stimulated corticosterone production. This Oryctolagus cuniculus (Rabbit) protein is Corticostatin-3.